We begin with the raw amino-acid sequence, 351 residues long: Holliday junction branch migration complex subunit RuvB (351 aa).

Acidic residues predominate over residues 1-12 (MGRFEDDAEVED). Residues 1-23 (MGRFEDDAEVEDREVSPALTVGE) form a disordered region. Positions 1–191 (MGRFEDDAEV…FGFTAHMDFY (191 aa)) are large ATPase domain (RuvB-L). ATP-binding positions include Leu30, Arg31, Gly72, Lys75, Thr76, Ser77, 138–140 (EDF), Arg181, Tyr191, and Arg228. Thr76 is a Mg(2+) binding site. A small ATPAse domain (RuvB-S) region spans residues 192 to 262 (EPVELERVLA…IAKSALEVYD (71 aa)). The tract at residues 265–351 (ELGLDRLDRA…TGIGQAGLFD (87 aa)) is head domain (RuvB-H). DNA is bound by residues Arg320 and Arg325.

It belongs to the RuvB family. In terms of assembly, homohexamer. Forms an RuvA(8)-RuvB(12)-Holliday junction (HJ) complex. HJ DNA is sandwiched between 2 RuvA tetramers; dsDNA enters through RuvA and exits via RuvB. An RuvB hexamer assembles on each DNA strand where it exits the tetramer. Each RuvB hexamer is contacted by two RuvA subunits (via domain III) on 2 adjacent RuvB subunits; this complex drives branch migration. In the full resolvosome a probable DNA-RuvA(4)-RuvB(12)-RuvC(2) complex forms which resolves the HJ.

It localises to the cytoplasm. The catalysed reaction is ATP + H2O = ADP + phosphate + H(+). Its function is as follows. The RuvA-RuvB-RuvC complex processes Holliday junction (HJ) DNA during genetic recombination and DNA repair, while the RuvA-RuvB complex plays an important role in the rescue of blocked DNA replication forks via replication fork reversal (RFR). RuvA specifically binds to HJ cruciform DNA, conferring on it an open structure. The RuvB hexamer acts as an ATP-dependent pump, pulling dsDNA into and through the RuvAB complex. RuvB forms 2 homohexamers on either side of HJ DNA bound by 1 or 2 RuvA tetramers; 4 subunits per hexamer contact DNA at a time. Coordinated motions by a converter formed by DNA-disengaged RuvB subunits stimulates ATP hydrolysis and nucleotide exchange. Immobilization of the converter enables RuvB to convert the ATP-contained energy into a lever motion, pulling 2 nucleotides of DNA out of the RuvA tetramer per ATP hydrolyzed, thus driving DNA branch migration. The RuvB motors rotate together with the DNA substrate, which together with the progressing nucleotide cycle form the mechanistic basis for DNA recombination by continuous HJ branch migration. Branch migration allows RuvC to scan DNA until it finds its consensus sequence, where it cleaves and resolves cruciform DNA. The chain is Holliday junction branch migration complex subunit RuvB from Mycolicibacterium smegmatis (strain ATCC 700084 / mc(2)155) (Mycobacterium smegmatis).